We begin with the raw amino-acid sequence, 389 residues long: Liposome tubulation protein MamY (389 aa).

The Cytoplasmic portion of the chain corresponds to 1 to 31 (MAIAAIMGDVLMLMGFNKAAFGKLNSASRAA). A helical membrane pass occupies residues 32-52 (LIGAVIWAVLSIVYLTIFNGW). Topologically, residues 53–62 (KNLFTMLPHE) are lumenal. The helical transmembrane segment at 63–83 (FFIVLLSIALPIGLTVLILML) threads the bilayer. Topologically, residues 84–389 (SRIVKSVDTL…TETAPDSGMD (306 aa)) are cytoplasmic.

Belongs to the magnetosome MamY family.

It is found in the magnetosome membrane. In terms of biological role, causes tubulation when added to magnetosome-derived liposomes, binds liposomes; may be involved in constriction of the cell inner membrane to form mature magnetosomes. Binds preferentially to cardiolipin, a component of bacterial membranes, with very poor to no binding of other tested (phospho)lipids. Addition of cardiolipin to magnetosome-derived lipids increases tubulation. May function with MamX, MamZ amd Mms6. The chain is Liposome tubulation protein MamY from Paramagnetospirillum magneticum (strain ATCC 700264 / AMB-1) (Magnetospirillum magneticum).